The primary structure comprises 341 residues: Transmembrane protein 120A-A (341 aa).

At 1–131 (MLFNPTGLTE…KQSKFAYKDE (131 aa)) the chain is on the cytoplasmic side. A CoA-binding site is contributed by Lys-129. The helical transmembrane segment at 132–151 (YEKFKLYLTVLLLFFSFTCR) threads the bilayer. Residues 152–157 (FLVSYR) are Extracellular-facing. The chain crosses the membrane as a helical span at residues 158–176 (VVDALFNFLLVWYYCTLTI). Residues 177 to 189 (RESILINNGSKIK) are Cytoplasmic-facing. CoA-binding residues include Ser-186 and Lys-187. A helical transmembrane segment spans residues 190-208 (GWWVFQHYVSTFLSGVMLT). Over 209–217 (WPDGELYQM) the chain is Extracellular. Residues 218-239 (FRNQFLSYSMYINFVQFFQYYY) form a helical membrane-spanning segment. Residues Gln-236, Tyr-239, Gln-240, and His-282 each contribute to the CoA site. At 240-269 (QSGCLYRLRALGERHNMDLTVEGFQSWMWR) the chain is on the cytoplasmic side. Residues 270–293 (GLTFLLPFLFLGHFFQLYNGITLF) form a helical membrane-spanning segment. Over 294-303 (QMTQLPEWKE) the chain is Extracellular. The chain crosses the membrane as a helical span at residues 304–329 (WQVLMCGSTFLVLFMGNFFTTLGVVY). Over 330–341 (HKYMDQDKAKGL) the chain is Cytoplasmic. Residue Lys-331 participates in CoA binding.

This sequence belongs to the TMEM120 family. Homodimer.

The protein localises to the cell membrane. It localises to the nucleus inner membrane. Its subcellular location is the endoplasmic reticulum. Its function is as follows. Multifunctional protein involved in mechanosensation, and plays an essential role in lipid metabolism. May function as a potential ion channel involved in sensing mechanical stimuli. TMEM120A is structurally similar to a lipid-modifying enzyme, ELOVL7, and contains a bound coenzyme A molecule, which suggests it might function as an enzyme in lipid metabolism. This chain is Transmembrane protein 120A-A (tmem120aa), found in Danio rerio (Zebrafish).